The following is a 516-amino-acid chain: uncharacterized protein (516 aa).

2 PFTB repeats span residues 45–86 and 401–443; these read RQDA…QRAD and DERA…DGSE.

This is an uncharacterized protein from Bradyrhizobium diazoefficiens (strain JCM 10833 / BCRC 13528 / IAM 13628 / NBRC 14792 / USDA 110).